Here is a 347-residue protein sequence, read N- to C-terminus: uncharacterized protein (347 aa).

10 helical membrane-spanning segments follow: residues 6–26, 37–57, 90–110, 114–134, 140–160, 182–202, 217–237, 262–282, 289–309, and 317–337; these read GSAS…GFAT, FGWF…LLGA, FMLF…GALF, LGMS…IVMT, IFGV…IVVA, WLLS…AVLV, GALI…LSLS, LIYL…NLYG, SFLP…AYIT, and LIST…GALL.

Its subcellular location is the cell membrane. This is an uncharacterized protein from Bacillus subtilis (strain 168).